We begin with the raw amino-acid sequence, 182 residues long: Probable RNA 2'-phosphotransferase (182 aa).

Belongs to the KptA/TPT1 family.

Functionally, removes the 2'-phosphate from RNA via an intermediate in which the phosphate is ADP-ribosylated by NAD followed by a presumed transesterification to release the RNA and generate ADP-ribose 1''-2''-cyclic phosphate (APPR&gt;P). May function as an ADP-ribosylase. This Pseudomonas paraeruginosa (strain DSM 24068 / PA7) (Pseudomonas aeruginosa (strain PA7)) protein is Probable RNA 2'-phosphotransferase.